The following is a 562-amino-acid chain: Protein wntless (562 aa).

Residues 1–13 (MSGTILENLSGRK) lie on the Cytoplasmic side of the membrane. Residues 14-34 (LSILVTTLLLCQVLCFLLGGL) form a helical membrane-spanning segment. Topologically, residues 35–239 (YAPLPAGHVT…AIHQNGGFTQ (205 aa)) are lumenal. Asparagine 58 is a glycosylation site (N-linked (GlcNAc...) asparagine). A helical transmembrane segment spans residues 240 to 260 (IWLLLKTVLFPFVVGIMIWFW). At 261–270 (RRVHLLQRSP) the chain is on the cytoplasmic side. The chain crosses the membrane as a helical span at residues 271–291 (ALLEYMLIYLGAALTFLNLPL). Topologically, residues 292-311 (EYLSLVFEMPYMLLLSDIRQ) are lumenal. A helical membrane pass occupies residues 312 to 332 (GIFYAMLLTFWLVFAGEHMLI). Topologically, residues 333–344 (QDAPNKSTIRSR) are cytoplasmic. The chain crosses the membrane as a helical span at residues 345-365 (YWKHLSAVVVGCISLFVFDIC). The Lumenal segment spans residues 366 to 390 (ERGVQLRNPFYSIWAMPLAAKMAMT). The chain crosses the membrane as a helical span at residues 391-411 (FIVLAGVSAAIYFLFLCYMIW). Residues 412-441 (KVFRNIGDKRTSLPSMSQARRLHYESLIYR) lie on the Cytoplasmic side of the membrane. A helical membrane pass occupies residues 442–462 (FKFLMLATIVCAALTVTGFIM). Over 463-482 (GQRAEGQWDWNDNVAIQPTS) the chain is Lumenal. The helical transmembrane segment at 483-503 (AFLTGVYGMWNIYIFALLILY) threads the bilayer. Topologically, residues 504–562 (APSHKQWPTMHHSDETTQSNENIVASAASEEIEFSHLPSDSNPSEISSLTSFTRKVAFD) are cytoplasmic. Residues 539 to 562 (HLPSDSNPSEISSLTSFTRKVAFD) are disordered. Positions 541 to 556 (PSDSNPSEISSLTSFT) are enriched in polar residues.

Belongs to the wntless family. Interacts with wg; in the Golgi. Interacts with Vps35, a component of the retromer complex; wls stability is regulated by Vps35.

Its subcellular location is the presynaptic cell membrane. It is found in the postsynaptic cell membrane. The protein resides in the cell membrane. The protein localises to the endoplasmic reticulum membrane. It localises to the endosome membrane. Its subcellular location is the golgi apparatus membrane. In terms of biological role, a segment polarity gene required for wingless (wg)-dependent patterning processes, acting in both wg-sending cells and wg-target cells. In non-neuronal cells wls directs wg secretion. The wls traffic loop encompasses the Golgi, the cell surface, an endocytic compartment and a retrograde route leading back to the Golgi, and involves clathrin-mediated endocytosis and the retromer complex (a conserved protein complex consisting of Vps35 and Vps26). In neuronal cells (the larval motorneuron NMJ), the wg signal moves across the synapse via the release of wls-containing exosome-like vesicles. Postsynaptic wls is required for the trafficking of fz2 through the fz2-interacting protein Grip. This is Protein wntless from Drosophila erecta (Fruit fly).